The following is a 336-amino-acid chain: MTETTARSIPLQIVQGDSPSAAPLQAGVKQLGGDKINRSPVQFADAPVLRKPSWIRVRIPSGNAVQNLKAKLRENRLVTVCEEASCPNIHECFGHGTATFMILGEVCTRRCSFCDVAHGRPKPPDANEPASLGQTVADMGLKYVVVTSVDRDDLRDGGAQHFVDCITAIREKSPGTRIEVLTPDFRGKGRMERALEILAQNPPDVFNHNIETVPDLYRNVRPGADYQWSLNLLKNFKAQHPDVPTKSGIMLGLGEDFEQIKATLRDLRAHDVDMITIGQYLQPTAHHHPVLKYWTPEDYKALEDYGYELGFSHVASGPMVRSSYHADVQAKGAGVS.

Cysteine 81, cysteine 86, cysteine 92, cysteine 107, cysteine 111, cysteine 114, and serine 323 together coordinate [4Fe-4S] cluster. The Radical SAM core domain maps to 93–312 (FGHGTATFMI…EDYGYELGFS (220 aa)).

Belongs to the radical SAM superfamily. Lipoyl synthase family. [4Fe-4S] cluster serves as cofactor.

The protein resides in the cytoplasm. It catalyses the reaction [[Fe-S] cluster scaffold protein carrying a second [4Fe-4S](2+) cluster] + N(6)-octanoyl-L-lysyl-[protein] + 2 oxidized [2Fe-2S]-[ferredoxin] + 2 S-adenosyl-L-methionine + 4 H(+) = [[Fe-S] cluster scaffold protein] + N(6)-[(R)-dihydrolipoyl]-L-lysyl-[protein] + 4 Fe(3+) + 2 hydrogen sulfide + 2 5'-deoxyadenosine + 2 L-methionine + 2 reduced [2Fe-2S]-[ferredoxin]. Its pathway is protein modification; protein lipoylation via endogenous pathway; protein N(6)-(lipoyl)lysine from octanoyl-[acyl-carrier-protein]: step 2/2. Functionally, catalyzes the radical-mediated insertion of two sulfur atoms into the C-6 and C-8 positions of the octanoyl moiety bound to the lipoyl domains of lipoate-dependent enzymes, thereby converting the octanoylated domains into lipoylated derivatives. The polypeptide is Lipoyl synthase (Stenotrophomonas maltophilia (strain K279a)).